The chain runs to 138 residues: MAALPDKDKLLRNFSRCANWEEKYLYIIELGQRLAPLSPEEHSVQNIIQGCQSQVWIVMDQDPTGVIALRGDSDAAIVKGLIAVVFILYDRMTAQDITEFDVRPWFEKMALTQHLTPSRSQGLEAMIRAIRAKAANIS.

Cys-51 acts as the Cysteine persulfide intermediate in catalysis.

Belongs to the SufE family. As to quaternary structure, homodimer. Interacts with SufS.

The protein localises to the cytoplasm. It participates in cofactor biosynthesis; iron-sulfur cluster biosynthesis. Its function is as follows. Participates in cysteine desulfuration mediated by SufS. Cysteine desulfuration mobilizes sulfur from L-cysteine to yield L-alanine and constitutes an essential step in sulfur metabolism for biosynthesis of a variety of sulfur-containing biomolecules. Functions as a sulfur acceptor for SufS, by mediating the direct transfer of the sulfur atom from the S-sulfanylcysteine of SufS, an intermediate product of cysteine desulfuration process. The polypeptide is Cysteine desulfuration protein SufE (Klebsiella pneumoniae subsp. pneumoniae (strain ATCC 700721 / MGH 78578)).